We begin with the raw amino-acid sequence, 228 residues long: Phosphatidylserine decarboxylase proenzyme (228 aa).

S197 serves as the catalytic Schiff-base intermediate with substrate; via pyruvic acid. S197 carries the pyruvic acid (Ser); by autocatalysis modification.

Belongs to the phosphatidylserine decarboxylase family. PSD-A subfamily. As to quaternary structure, heterodimer of a large membrane-associated beta subunit and a small pyruvoyl-containing alpha subunit. The cofactor is pyruvate. In terms of processing, is synthesized initially as an inactive proenzyme. Formation of the active enzyme involves a self-maturation process in which the active site pyruvoyl group is generated from an internal serine residue via an autocatalytic post-translational modification. Two non-identical subunits are generated from the proenzyme in this reaction, and the pyruvate is formed at the N-terminus of the alpha chain, which is derived from the carboxyl end of the proenzyme. The post-translation cleavage follows an unusual pathway, termed non-hydrolytic serinolysis, in which the side chain hydroxyl group of the serine supplies its oxygen atom to form the C-terminus of the beta chain, while the remainder of the serine residue undergoes an oxidative deamination to produce ammonia and the pyruvoyl prosthetic group on the alpha chain.

It localises to the cell membrane. It carries out the reaction a 1,2-diacyl-sn-glycero-3-phospho-L-serine + H(+) = a 1,2-diacyl-sn-glycero-3-phosphoethanolamine + CO2. The protein operates within phospholipid metabolism; phosphatidylethanolamine biosynthesis; phosphatidylethanolamine from CDP-diacylglycerol: step 2/2. In terms of biological role, catalyzes the formation of phosphatidylethanolamine (PtdEtn) from phosphatidylserine (PtdSer). The sequence is that of Phosphatidylserine decarboxylase proenzyme from Bacteroides fragilis (strain ATCC 25285 / DSM 2151 / CCUG 4856 / JCM 11019 / LMG 10263 / NCTC 9343 / Onslow / VPI 2553 / EN-2).